The chain runs to 667 residues: Cysteine-rich receptor-like protein kinase 11 (667 aa).

The N-terminal stretch at 1-24 (MKQRSLFSVLCFFFISFGVASVSA) is a signal peptide. 2 consecutive Gnk2-homologous domains span residues 25–129 (QTCT…NTSF) and 135–248 (LNPR…LYTY). The Extracellular segment spans residues 25-292 (QTCTTDKGTF…SKGISAGVVV (268 aa)). N-linked (GlcNAc...) asparagine glycans are attached at residues asparagine 37, asparagine 54, asparagine 64, asparagine 106, asparagine 126, asparagine 150, and asparagine 254. The segment covering 259–268 (SPPPEPPVTV) has biased composition (pro residues). The tract at residues 259–282 (SPPPEPPVTVPQPAGDQDNPTNND) is disordered. A glycan (N-linked (GlcNAc...) asparagine) is linked at asparagine 281. The helical transmembrane segment at 293–313 (AITVPTVIAILILLVLGFVLF) threads the bilayer. At 314 to 667 (RRRKSYQRTK…YTSKSSSFSS (354 aa)) the chain is on the cytoplasmic side. Residues 350 to 629 (FSTSNKLGEG…IILMLTSNTI (280 aa)) enclose the Protein kinase domain. Residues 356–364 (LGEGGFGAV) and lysine 378 contribute to the ATP site. A Phosphotyrosine modification is found at tyrosine 423. Residue aspartate 475 is the Proton acceptor of the active site. Serine 479 is subject to Phosphoserine. Residue threonine 515 is modified to Phosphothreonine. Position 523 is a phosphotyrosine (tyrosine 523).

The protein belongs to the protein kinase superfamily. Ser/Thr protein kinase family. CRK subfamily. Detected in root, stem, leaf and flower.

It localises to the membrane. It carries out the reaction L-seryl-[protein] + ATP = O-phospho-L-seryl-[protein] + ADP + H(+). It catalyses the reaction L-threonyl-[protein] + ATP = O-phospho-L-threonyl-[protein] + ADP + H(+). The polypeptide is Cysteine-rich receptor-like protein kinase 11 (CRK11) (Arabidopsis thaliana (Mouse-ear cress)).